The primary structure comprises 710 residues: MGGKQRDEDDEAYGKPVKYDPSFRGPIKNRSCTDVICCVLFLLFILGYIVVGIVAWLYGDPRQVLYPRNSTGAYCGMGENKDKPYLLYFNIFSCILSSNIISVAENGLQCPTPQVCVSSCPEDPWTVGKNEFSQTVGEVFYTKNRNFCLPGVPWNMTVITSLQQELCPSFLLPSAPALGRCFPWTNVTPPALPGITNDTTIQQGISGLIDSLNARDISVKIFEDFAQSWYWILVALGVALVLSLLFILLLRLVAGPLVLVLILGVLGVLAYGIYYCWEEYRVLRDKGASISQLGFTTNLSAYQSVQETWLAALIVLAVLEAILLLMLIFLRQRIRIAIALLKEASKAVGQMMSTMFYPLVTFVLLLICIAYWAMTALYLATSGQPQYVLWASNISSPGCEKVPINTSCNPTAHLVNSSCPGLMCVFQGYSSKGLIQRSVFNLQIYGVLGLFWTLNWVLALGQCVLAGAFASFYWAFHKPQDIPTFPLISAFIRTLRYHTGSLAFGALILTLVQIARVILEYIDHKLRGVQNPVARCIMCCFKCCLWCLEKFIKFLNRNAYIMIAIYGKNFCVSAKNAFMLLMRNIVRVVVLDKVTDLLLFFGKLLVVGGVGVLSFFFFSGRIPGLGKDFKSPHLNYYWLPIMTSILGAYVIASGFFSVFGMCVDTLFLCFLEDLERNNGSLDRPYYMSKSLLKILGKKNEAPPDNKKRKK.

Residues 1-34 (MGGKQRDEDDEAYGKPVKYDPSFRGPIKNRSCTD) lie on the Cytoplasmic side of the membrane. A helical membrane pass occupies residues 35-55 (VICCVLFLLFILGYIVVGIVA). Topologically, residues 56–229 (WLYGDPRQVL…KIFEDFAQSW (174 aa)) are extracellular. N-linked (GlcNAc...) asparagine glycosylation is found at Asn69, Asn155, and Asn197. A helical membrane pass occupies residues 230-250 (YWILVALGVALVLSLLFILLL). Over 251-252 (RL) the chain is Cytoplasmic. The helical transmembrane segment at 253–273 (VAGPLVLVLILGVLGVLAYGI) threads the bilayer. Over 274 to 309 (YYCWEEYRVLRDKGASISQLGFTTNLSAYQSVQETW) the chain is Extracellular. N-linked (GlcNAc...) asparagine glycosylation occurs at Asn298. The chain crosses the membrane as a helical span at residues 310-330 (LAALIVLAVLEAILLLMLIFL). The Cytoplasmic segment spans residues 331–358 (RQRIRIAIALLKEASKAVGQMMSTMFYP). Residues 359–379 (LVTFVLLLICIAYWAMTALYL) form a helical membrane-spanning segment. Topologically, residues 380-455 (ATSGQPQYVL…GVLGLFWTLN (76 aa)) are extracellular. N-linked (GlcNAc...) asparagine glycosylation is found at Asn393, Asn405, and Asn416. Residues 456 to 476 (WVLALGQCVLAGAFASFYWAF) form a helical membrane-spanning segment. The Cytoplasmic segment spans residues 477–501 (HKPQDIPTFPLISAFIRTLRYHTGS). A helical membrane pass occupies residues 502-522 (LAFGALILTLVQIARVILEYI). Residues 523–560 (DHKLRGVQNPVARCIMCCFKCCLWCLEKFIKFLNRNAY) are Extracellular-facing. Residues 561 to 581 (IMIAIYGKNFCVSAKNAFMLL) traverse the membrane as a helical segment. The Cytoplasmic portion of the chain corresponds to 582–597 (MRNIVRVVVLDKVTDL). The chain crosses the membrane as a helical span at residues 598-618 (LLFFGKLLVVGGVGVLSFFFF). The Extracellular segment spans residues 619-638 (SGRIPGLGKDFKSPHLNYYW). Residues 639 to 659 (LPIMTSILGAYVIASGFFSVF) form a helical membrane-spanning segment. Residues 660 to 710 (GMCVDTLFLCFLEDLERNNGSLDRPYYMSKSLLKILGKKNEAPPDNKKRKK) are Cytoplasmic-facing.

Belongs to the CTL (choline transporter-like) family. N-glycosylated; N-glycosylation of Asn-69, Asn-155 and Asn-393 is required for a proper thiamine pyrophosphate uptake. Highly expressed in colon, also detected in prostate, trachea and lung. Isoform 3 is also expressed in colon but a lower levels. In terms of tissue distribution, expressed in colon at low levels.

The protein resides in the membrane. It localises to the apical cell membrane. It catalyses the reaction choline(out) + n H(+)(in) = choline(in) + n H(+)(out). It carries out the reaction thiamine diphosphate(out) = thiamine diphosphate(in). In terms of biological role, choline transporter that plays a role in the choline-acetylcholine system and is required to the efferent innervation of hair cells in the olivocochlear bundle for the maintenance of physiological function of outer hair cells and the protection of hair cells from acoustic injury. Also described as a thiamine pyrophosphate transporter in colon, may mediate the absorption of microbiota-generated thiamine pyrophosphate and contribute to host thiamine (vitamin B1) homeostasis. Its function is as follows. Also has thiamine pyrophosphate transporter activity. The protein is Choline transporter-like protein 4 of Homo sapiens (Human).